The sequence spans 680 residues: NADPH--cytochrome P450 reductase (680 aa).

Residues 1–5 (MALDK) lie on the Lumenal side of the membrane. The helical transmembrane segment at 6 to 23 (LDLYVIITLVVAIAAYFA) threads the bilayer. Topologically, residues 24-680 (KNQFLDQQQD…VQNRYQEDVW (657 aa)) are cytoplasmic. The region spanning 60–204 (TLLLFGSQTG…DFLAWKDNVF (145 aa)) is the Flavodoxin-like domain. FMN is bound by residues 66–71 (SQTGTA), 117–120 (ATYG), 152–161 (LGNSTYEFFN), and aspartate 187. Residues 264-509 (THPFLARIVK…NGPRGKFSKF (246 aa)) enclose the FAD-binding FR-type domain. Residue arginine 283 coordinates NADP(+). Residues 439 to 442 (RYYS), 457 to 459 (TAV), and 473 to 476 (GVVT) contribute to the FAD site. Residues threonine 537, 599–600 (SR), 606–610 (KVYVQ), and aspartate 642 each bind NADP(+). Tryptophan 680 contributes to the FAD binding site.

Belongs to the NADPH--cytochrome P450 reductase family. The protein in the N-terminal section; belongs to the flavodoxin family. This sequence in the C-terminal section; belongs to the flavoprotein pyridine nucleotide cytochrome reductase family. FAD is required as a cofactor. FMN serves as cofactor.

It localises to the endoplasmic reticulum membrane. Its subcellular location is the mitochondrion outer membrane. It is found in the cell membrane. It catalyses the reaction 2 oxidized [cytochrome P450] + NADPH = 2 reduced [cytochrome P450] + NADP(+) + H(+). Functionally, this enzyme is required for electron transfer from NADP to cytochrome P450 in microsomes. It can also provide electron transfer to heme oxygenase and cytochrome B5. Involved in ergosterol biosynthesis. This is NADPH--cytochrome P450 reductase from Candida tropicalis (Yeast).